The following is a 292-amino-acid chain: Diaminopimelate epimerase (292 aa).

Residues N14 and N81 each coordinate substrate. Residue C90 is the Proton donor of the active site. Substrate is bound by residues 91-92 (GN), N166, N202, and 220-221 (ER). Catalysis depends on C229, which acts as the Proton acceptor. Residue 230-231 (GT) coordinates substrate.

Belongs to the diaminopimelate epimerase family. Homodimer.

The protein resides in the cytoplasm. It catalyses the reaction (2S,6S)-2,6-diaminopimelate = meso-2,6-diaminopimelate. It participates in amino-acid biosynthesis; L-lysine biosynthesis via DAP pathway; DL-2,6-diaminopimelate from LL-2,6-diaminopimelate: step 1/1. In terms of biological role, catalyzes the stereoinversion of LL-2,6-diaminopimelate (L,L-DAP) to meso-diaminopimelate (meso-DAP), a precursor of L-lysine and an essential component of the bacterial peptidoglycan. The polypeptide is Diaminopimelate epimerase (Rhodococcus erythropolis (strain PR4 / NBRC 100887)).